The following is a 139-amino-acid chain: Two-component response regulator 24 (139 aa).

Residues 19-134 (TALVVDDSFV…KLLSILHKLN (116 aa)) form the Response regulatory domain. Residue aspartate 69 is modified to 4-aspartylphosphate.

Belongs to the ARR family. Type-A subfamily. Two-component system major event consists of a His-to-Asp phosphorelay between a sensor histidine kinase (HK) and a response regulator (RR). In plants, the His-to-Asp phosphorelay involves an additional intermediate named Histidine-containing phosphotransfer protein (HPt). This multistep phosphorelay consists of a His-Asp-His-Asp sequential transfer of a phosphate group between first a His and an Asp of the HK protein, followed by the transfer to a conserved His of the HPt protein and finally the transfer to an Asp in the receiver domain of the RR protein. In terms of tissue distribution, mostly expressed in flowers and siliques, primarily restricted to pollen grains.

Its subcellular location is the nucleus. Its function is as follows. Functions as a response regulator involved in His-to-Asp phosphorelay signal transduction system. Phosphorylation of the Asp residue in the receiver domain activates the ability of the protein to promote the transcription of target genes. Type-A response regulators seem to act as negative regulators of the cytokinin signaling. In Arabidopsis thaliana (Mouse-ear cress), this protein is Two-component response regulator 24.